A 342-amino-acid polypeptide reads, in one-letter code: uncharacterized protein (342 aa).

10 helical membrane passes run 8–28 (FESS…TSLF), 39–59 (ISFL…MLWI), 79–99 (SSFS…FILI), 108–128 (IFWV…PFYM), 142–162 (GWYI…LIMP), 175–195 (INYF…AVVI), 207–227 (AMAP…VALI), 242–262 (FYIF…MAII), 276–296 (AMSW…THLV), and 304–324 (IVDY…IVTL).

Belongs to the tellurite-resistance/dicarboxylate transporter (TDT) family.

It localises to the cell membrane. This is an uncharacterized protein from Methanocaldococcus jannaschii (strain ATCC 43067 / DSM 2661 / JAL-1 / JCM 10045 / NBRC 100440) (Methanococcus jannaschii).